The primary structure comprises 946 residues: Atos homolog protein A (946 aa).

The transactivation domain 1 (TAD1) stretch occupies residues 24 to 32 (ALLITEGRT). The span at 34–43 (EHSVKGRTEG) shows a compositional bias: basic and acidic residues. Disordered regions lie at residues 34-58 (EHSV…APNK), 246-271 (SVTQ…FTKP), 484-524 (FQSS…TGNQ), and 547-567 (SCTD…SQKV). Polar residues-rich tracts occupy residues 247–267 (VTQP…SQHA) and 484–500 (FQSS…NENI). 2 stretches are compositionally biased toward basic and acidic residues: residues 503–517 (LPEK…HGEI) and 547–560 (SCTD…KDNP). The interval 749 to 806 (LLGNFEESVLNYRFEPLGVVEGFTAEVGASGIFCPTHMTLPVKVSFYSVSDDNAPSPY) is required for macropage invasion. The transactivation domain 2 (TAD2) stretch occupies residues 833 to 841 (FNPNKTVVK).

It belongs to the ATOS family.

The protein localises to the nucleus. Its function is as follows. Transcription regulator that syncronizes transcriptional and translational programs to promote macrophage invasion of tissues. The protein is Atos homolog protein A (atosa) of Xenopus tropicalis (Western clawed frog).